We begin with the raw amino-acid sequence, 513 residues long: ATP synthase subunit alpha (513 aa).

Residue Gly169–Thr176 coordinates ATP.

This sequence belongs to the ATPase alpha/beta chains family. As to quaternary structure, F-type ATPases have 2 components, CF(1) - the catalytic core - and CF(0) - the membrane proton channel. CF(1) has five subunits: alpha(3), beta(3), gamma(1), delta(1), epsilon(1). CF(0) has three main subunits: a(1), b(2) and c(9-12). The alpha and beta chains form an alternating ring which encloses part of the gamma chain. CF(1) is attached to CF(0) by a central stalk formed by the gamma and epsilon chains, while a peripheral stalk is formed by the delta and b chains.

The protein resides in the cell inner membrane. It carries out the reaction ATP + H2O + 4 H(+)(in) = ADP + phosphate + 5 H(+)(out). Functionally, produces ATP from ADP in the presence of a proton gradient across the membrane. The alpha chain is a regulatory subunit. The sequence is that of ATP synthase subunit alpha from Pseudoalteromonas translucida (strain TAC 125).